The sequence spans 305 residues: Acyl transferase (305 aa).

Residues S116, D213, and H243 each act as charge relay system in the active site.

Belongs to the LuxD family.

It functions in the pathway lipid metabolism; fatty acid reduction for biolumincescence. Functionally, acyl transferase is part of the fatty acid reductase system required for aldehyde biosynthesis; it produces fatty acids for the luminescent reaction. This is Acyl transferase from Shewanella woodyi (strain ATCC 51908 / MS32).